The sequence spans 131 residues: Large ribosomal subunit protein bL17 (131 aa).

It belongs to the bacterial ribosomal protein bL17 family. As to quaternary structure, part of the 50S ribosomal subunit. Contacts protein L32.

This chain is Large ribosomal subunit protein bL17, found in Polynucleobacter necessarius subsp. necessarius (strain STIR1).